Consider the following 607-residue polypeptide: Aspartate--tRNA(Asp/Asn) ligase (607 aa).

Glutamate 194 contributes to the L-aspartate binding site. The interval 218-221 (QLFK) is aspartate. Residue arginine 240 coordinates L-aspartate. Residues 240-242 (RDE) and glutamine 249 contribute to the ATP site. Histidine 468 provides a ligand contact to L-aspartate. Residue glutamate 502 coordinates ATP. Arginine 509 lines the L-aspartate pocket. 554-557 (GLDR) contributes to the ATP binding site.

The protein belongs to the class-II aminoacyl-tRNA synthetase family. Type 1 subfamily. In terms of assembly, homodimer.

Its subcellular location is the cytoplasm. The catalysed reaction is tRNA(Asx) + L-aspartate + ATP = L-aspartyl-tRNA(Asx) + AMP + diphosphate. Its function is as follows. Aspartyl-tRNA synthetase with relaxed tRNA specificity since it is able to aspartylate not only its cognate tRNA(Asp) but also tRNA(Asn). Reaction proceeds in two steps: L-aspartate is first activated by ATP to form Asp-AMP and then transferred to the acceptor end of tRNA(Asp/Asn). This Desulfotalea psychrophila (strain LSv54 / DSM 12343) protein is Aspartate--tRNA(Asp/Asn) ligase.